The chain runs to 424 residues: Acetyl-CoA acetyltransferase, mitochondrial (424 aa).

A mitochondrion-targeting transit peptide spans M1–Y30. K63 carries the post-translational modification N6-acetyllysine; alternate. K63 carries the N6-succinyllysine; alternate modification. K75 carries the post-translational modification N6-succinyllysine. The active-site Acyl-thioester intermediate is C123. N6-acetyllysine; alternate is present on residues K171, K178, K187, and K199. Residues K171, K178, K187, and K199 each carry the N6-succinyllysine; alternate modification. Position 204 is a phosphoserine (S204). Position 216 (Y216) interacts with CoA. Residue Y216 participates in K(+) binding. 2 positions are modified to N6-acetyllysine; alternate: K220 and K227. K220 and K227 each carry N6-succinyllysine; alternate. An N6-succinyllysine modification is found at K240. At K242 the chain carries N6-acetyllysine; alternate. K242 is modified (N6-succinyllysine; alternate). N6-acetyllysine is present on residues K248 and K254. Residues R255–D257 and K260 each bind CoA. K260 is modified (N6-acetyllysine; alternate). K260 carries the N6-succinyllysine; alternate modification. An N6-succinyllysine mark is found at K263 and K265. K270 is subject to N6-acetyllysine. K(+) contacts are provided by A277, A278, and A280. A CoA-binding site is contributed by S281. N6-acetyllysine is present on K335. Residue V378 coordinates K(+). C410 serves as the catalytic Proton donor/acceptor.

This sequence belongs to the thiolase-like superfamily. Thiolase family. Homotetramer. Succinylation at Lys-265, adjacent to a coenzyme A binding site. Desuccinylated by SIRT5.

Its subcellular location is the mitochondrion. The enzyme catalyses 2 acetyl-CoA = acetoacetyl-CoA + CoA. It carries out the reaction propanoyl-CoA + acetyl-CoA = 2-methyl-3-oxobutanoyl-CoA + CoA. The protein operates within lipid metabolism; fatty acid beta-oxidation. Activated by potassium ions, but not sodium ions. This is one of the enzymes that catalyzes the last step of the mitochondrial beta-oxidation pathway, an aerobic process breaking down fatty acids into acetyl-CoA. Using free coenzyme A/CoA, catalyzes the thiolytic cleavage of medium- to long-chain 3-oxoacyl-CoAs into acetyl-CoA and a fatty acyl-CoA shortened by two carbon atoms. The activity of the enzyme is reversible and it can also catalyze the condensation of two acetyl-CoA molecules into acetoacetyl-CoA. Thereby, it plays a major role in ketone body metabolism. In Rattus norvegicus (Rat), this protein is Acetyl-CoA acetyltransferase, mitochondrial (Acat1).